Consider the following 567-residue polypeptide: Urease subunit alpha (567 aa).

Residues 129 to 567 form the Urease domain; sequence GGVDTHIHFI…LPMAQRYFLF (439 aa). Residues His134, His136, and Lys217 each contribute to the Ni(2+) site. Lys217 carries the N6-carboxylysine modification. His219 contacts substrate. The Ni(2+) site is built by His246 and His272. His320 acts as the Proton donor in catalysis. Residue Asp360 coordinates Ni(2+).

The protein belongs to the metallo-dependent hydrolases superfamily. Urease alpha subunit family. As to quaternary structure, heterotrimer of UreA (gamma), UreB (beta) and UreC (alpha) subunits. Three heterotrimers associate to form the active enzyme. Requires Ni cation as cofactor. In terms of processing, carboxylation allows a single lysine to coordinate two nickel ions.

Its subcellular location is the cytoplasm. It carries out the reaction urea + 2 H2O + H(+) = hydrogencarbonate + 2 NH4(+). The protein operates within nitrogen metabolism; urea degradation; CO(2) and NH(3) from urea (urease route): step 1/1. The protein is Urease subunit alpha of Aliivibrio fischeri (strain MJ11) (Vibrio fischeri).